The primary structure comprises 273 residues: Formamidopyrimidine-DNA glycosylase (273 aa).

The active-site Schiff-base intermediate with DNA is the Pro-2. The active-site Proton donor is the Glu-3. Residue Lys-58 is the Proton donor; for beta-elimination activity of the active site. DNA is bound by residues His-92, Arg-111, and Arg-153. An FPG-type zinc finger spans residues Arg-238–Tyr-272. Arg-262 acts as the Proton donor; for delta-elimination activity in catalysis.

The protein belongs to the FPG family. In terms of assembly, monomer. Zn(2+) is required as a cofactor.

The catalysed reaction is Hydrolysis of DNA containing ring-opened 7-methylguanine residues, releasing 2,6-diamino-4-hydroxy-5-(N-methyl)formamidopyrimidine.. The enzyme catalyses 2'-deoxyribonucleotide-(2'-deoxyribose 5'-phosphate)-2'-deoxyribonucleotide-DNA = a 3'-end 2'-deoxyribonucleotide-(2,3-dehydro-2,3-deoxyribose 5'-phosphate)-DNA + a 5'-end 5'-phospho-2'-deoxyribonucleoside-DNA + H(+). Its function is as follows. Involved in base excision repair of DNA damaged by oxidation or by mutagenic agents. Acts as a DNA glycosylase that recognizes and removes damaged bases. Has a preference for oxidized purines, such as 7,8-dihydro-8-oxoguanine (8-oxoG). Has AP (apurinic/apyrimidinic) lyase activity and introduces nicks in the DNA strand. Cleaves the DNA backbone by beta-delta elimination to generate a single-strand break at the site of the removed base with both 3'- and 5'-phosphates. This chain is Formamidopyrimidine-DNA glycosylase, found in Rickettsia canadensis (strain McKiel).